Here is a 561-residue protein sequence, read N- to C-terminus: Methionine--tRNA ligase (561 aa).

The 'HIGH' region signature appears at 11-21 (PYVNTVPHLGN). Zn(2+) contacts are provided by cysteine 143, cysteine 146, cysteine 156, and cysteine 159. Position 334 (lysine 334) interacts with ATP.

This sequence belongs to the class-I aminoacyl-tRNA synthetase family. MetG type 1 subfamily. Requires Zn(2+) as cofactor.

The protein resides in the cytoplasm. The catalysed reaction is tRNA(Met) + L-methionine + ATP = L-methionyl-tRNA(Met) + AMP + diphosphate. Functionally, is required not only for elongation of protein synthesis but also for the initiation of all mRNA translation through initiator tRNA(fMet) aminoacylation. The polypeptide is Methionine--tRNA ligase (Ignicoccus hospitalis (strain KIN4/I / DSM 18386 / JCM 14125)).